The primary structure comprises 24 residues: Positive regulator of RepFIC repA1 expression (24 aa).

In Escherichia coli (strain K12), this protein is Positive regulator of RepFIC repA1 expression (repL).